Here is a 212-residue protein sequence, read N- to C-terminus: Ribonuclease HII (212 aa).

In terms of domain architecture, RNase H type-2 spans 4–206 (EVQCGIDEAG…YKKIKEDVES (203 aa)). A divalent metal cation is bound by residues D10, E11, and D103.

This sequence belongs to the RNase HII family. Mn(2+) is required as a cofactor. It depends on Mg(2+) as a cofactor.

It is found in the cytoplasm. The enzyme catalyses Endonucleolytic cleavage to 5'-phosphomonoester.. Endonuclease that specifically degrades the RNA of RNA-DNA hybrids. This is Ribonuclease HII from Thermoplasma volcanium (strain ATCC 51530 / DSM 4299 / JCM 9571 / NBRC 15438 / GSS1).